We begin with the raw amino-acid sequence, 316 residues long: Pantothenate kinase (316 aa).

ATP is bound at residue 95-102; sequence GSVAVGKS.

This sequence belongs to the prokaryotic pantothenate kinase family.

It is found in the cytoplasm. It carries out the reaction (R)-pantothenate + ATP = (R)-4'-phosphopantothenate + ADP + H(+). It functions in the pathway cofactor biosynthesis; coenzyme A biosynthesis; CoA from (R)-pantothenate: step 1/5. The sequence is that of Pantothenate kinase from Shewanella oneidensis (strain ATCC 700550 / JCM 31522 / CIP 106686 / LMG 19005 / NCIMB 14063 / MR-1).